The primary structure comprises 90 residues: Small regulatory polypeptide of amino acid response (90 aa).

At 1–18 (MGAKAPRGPKVAQWAMET) the chain is on the lumenal side. Residues 19–39 (AVIGVVVVLFVVTVAITCVLC) traverse the membrane as a helical segment. Over 40–90 (CFSCDSRAQDPQGGPGRSFTVATFRQEASLFTGPVRHAQPVPSAQDFWTFM) the chain is Cytoplasmic.

In terms of assembly, interacts with components of the lysosomal V-ATPase complex. Interacts with ATP6V0A1. Interacts with ATP6V0A2. As to expression, highly expressed in lung, heart and skeletal muscle.

The protein resides in the late endosome membrane. It is found in the lysosome membrane. Functionally, negative regulator of amino acid sensing and mTORC1, a signaling complex promoting cell growth in response to growth factors, energy levels and amino acids. Negatively regulates mTORC1 activation by inhibiting recruitment of mTORC1 to lysosomes upon stimulation with amino acids: acts by promoting the formation of a tightly bound supercomplex composed of the lysosomal V-ATPase, Ragulator and Rag GTPases, preventing recruitment of mTORC1. Acts as a regulator of muscle regeneration following injury by regulating mTORC1 activation. The protein is Small regulatory polypeptide of amino acid response of Homo sapiens (Human).